We begin with the raw amino-acid sequence, 598 residues long: uncharacterized protein (598 aa).

Residue Ser-46 is modified to Phosphoserine. One can recognise an SAC domain in the interval 106-441; that stretch reads LQNHLKTGPF…ADYISLSYSG (336 aa). The next 2 membrane-spanning stretches (helical) occupy residues 508-528 and 535-555; these read TIRC…MTLF and ILPP…SLYY.

The protein resides in the endoplasmic reticulum membrane. This is an uncharacterized protein from Schizosaccharomyces pombe (strain 972 / ATCC 24843) (Fission yeast).